A 453-amino-acid polypeptide reads, in one-letter code: MDQTSIQASSGDAAAADQLKYMPGFGNDFETESLPGALPQGQNSPQKCNYGLYAEQLSGSPFTAPRGTNERSWLYRIRPSVRHTRRFSNASYPLWKTAPCLDEHSLPLGQLRWDPIPPPEERLNFLEGVRTITTAGDATTQVGMSAHAYVFNEDMVDDYFFNADGELLIVPQLGALRVFTEMGIMDVEPSEICLVPRGMMFKILTSGKQTAWRGYICENYGAKFTLPERGPIGANCLANPRDFKTPVAAYEDKEKPCRVHVKWCGKFYVTEIGHSPLDVVAWHGNYAPFKYDLRTFSPVGAILFDHPDPSIFSVLTAPTEDAGTANVDFVIFPPRWLVAEHTFRPPWYHRNIMSEFMGLIHGQYDAKEEGFVPGGMSLHNMMLPHGPDALAFEKAANAELKPVKLDHTMAFMFETRYPQQLTKYAAELETLQDDYLECWDGLERKFDGNPGIK.

The active-site Proton acceptor is His-306. Positions 349 and 355 each coordinate Fe cation. Homogentisate-binding residues include Tyr-364 and His-385. Fe cation is bound at residue His-385.

It belongs to the homogentisate dioxygenase family. Hexamer; dimer of trimers. Requires Fe cation as cofactor.

It carries out the reaction homogentisate + O2 = 4-maleylacetoacetate + H(+). Its pathway is amino-acid degradation; L-phenylalanine degradation; acetoacetate and fumarate from L-phenylalanine: step 4/6. Its function is as follows. Involved in the catabolism of homogentisate (2,5-dihydroxyphenylacetate or 2,5-OH-PhAc), a central intermediate in the degradation of phenylalanine and tyrosine. Catalyzes the oxidative ring cleavage of the aromatic ring of homogentisate to yield maleylacetoacetate. This Rhizobium etli (strain CIAT 652) protein is Homogentisate 1,2-dioxygenase.